We begin with the raw amino-acid sequence, 509 residues long: MSQWWKEAVVYQIYPRSFYDSNGDGFGDLQGVIQKLDYIKRLGADVIWLCPVFDSPQDDNGYDISDYRSIYEKFGTNDDMFQLIDEVHKRGMKIIMDLVVNHSSDEHAWFAESRKSKDNPYRDYYFWKDPKADGSEPNNWGAIFSGPAWSAMSTAQYYLHYFSKKQPDLNWENEAVRREVYDLMTFWMDRGVDGWRMDVIGSISKFVDFPDYETDDSRPYVVGRYHSNGPRLHEFIQEMNREVLSRYDCMTVGEAGGSDVEEAKKYTDPSRHELNMIFTFEHMDIDTKQHSPNGKWQMKPFDPIALKKTMTRWQTALMNVGWNTLYFENHDQPRVISAGAMTRELRKQSRQSISNSSARHEGNPFIYQGEEIGMTNSEMPLEMYDDLEIKNAYRELVIENKTMTEEDFRKAVAKKGRDHARTPMQWDDGKYAGFTDGEAWLAVNPRYQEINVKESLADEDSIFYYYQKLIGLRKQNKVIVYGDYRLLLEEDPRIFAYIREYRGEKLLVP.

The active-site Nucleophile is the aspartate 198. Residue glutamate 254 is the Proton donor of the active site.

Belongs to the glycosyl hydrolase 13 family.

The protein localises to the cytoplasm. It carries out the reaction Hydrolysis of (1-&gt;6)-alpha-D-glucosidic linkages in some oligosaccharides produced from starch and glycogen by alpha-amylase, and in isomaltose.. The polypeptide is Oligo-1,6-glucosidase (malL) (Bacillus sp. (strain F5)).